The following is a 150-amino-acid chain: N-alpha-acetyltransferase 30 (150 aa).

The N-acetyltransferase domain occupies 2–150; sequence VTIVPYSHQY…DAFRYILYPN (149 aa).

Belongs to the acetyltransferase family. MAK3 subfamily.

It localises to the cytoplasm. It is found in the nucleus. The enzyme catalyses N-terminal L-methionyl-L-leucyl-[protein] + acetyl-CoA = N-terminal N(alpha)-acetyl-L-methionyl-L-leucyl-[protein] + CoA + H(+). The catalysed reaction is N-terminal L-methionyl-L-isoleucyl-[protein] + acetyl-CoA = N-terminal N(alpha)-acetyl-L-methionyl-L-isoleucyl-[protein] + CoA + H(+). It carries out the reaction N-terminal L-methionyl-L-phenylalanyl-[protein] + acetyl-CoA = N-terminal N(alpha)-acetyl-L-methionyl-L-phenylalanyl-[protein] + CoA + H(+). It catalyses the reaction N-terminal L-methionyl-L-tryptophyl-[protein] + acetyl-CoA = N-terminal N(alpha)-acetyl-L-methionyl-L-tryptophyl-[protein] + CoA + H(+). The enzyme catalyses N-terminal L-methionyl-L-tyrosyl-[protein] + acetyl-CoA = N-terminal N(alpha)-acetyl-L-methionyl-L-tyrosyl-[protein] + CoA + H(+). In terms of biological role, catalytic component of the NatC N-terminal acetyltransferase. This is N-alpha-acetyltransferase 30 (naa30) from Schizosaccharomyces pombe (strain 972 / ATCC 24843) (Fission yeast).